The chain runs to 120 residues: Ribonuclease P protein component (120 aa).

The protein belongs to the RnpA family. As to quaternary structure, consists of a catalytic RNA component (M1 or rnpB) and a protein subunit.

It catalyses the reaction Endonucleolytic cleavage of RNA, removing 5'-extranucleotides from tRNA precursor.. Functionally, RNaseP catalyzes the removal of the 5'-leader sequence from pre-tRNA to produce the mature 5'-terminus. It can also cleave other RNA substrates such as 4.5S RNA. The protein component plays an auxiliary but essential role in vivo by binding to the 5'-leader sequence and broadening the substrate specificity of the ribozyme. The sequence is that of Ribonuclease P protein component from Azoarcus sp. (strain BH72).